The primary structure comprises 488 residues: Probable Xaa-Pro aminopeptidase ATEG_00858 (488 aa).

Residues aspartate 273, aspartate 284, glutamate 417, and glutamate 456 each contribute to the Mn(2+) site.

The protein belongs to the peptidase M24B family. Mn(2+) serves as cofactor.

The catalysed reaction is Release of any N-terminal amino acid, including proline, that is linked to proline, even from a dipeptide or tripeptide.. Catalyzes the removal of a penultimate prolyl residue from the N-termini of peptides. This chain is Probable Xaa-Pro aminopeptidase ATEG_00858, found in Aspergillus terreus (strain NIH 2624 / FGSC A1156).